Reading from the N-terminus, the 560-residue chain is Glutamate--tRNA ligase, chloroplastic/mitochondrial (560 aa).

47-49 (RFA) lines the L-glutamate pocket. The short motif at 50-60 (PSPTGNLHVGG) is the 'HIGH' region element. His57 contributes to the ATP binding site. Residues Glu83, 235–239 (YNFCV), and Arg253 contribute to the L-glutamate site. Residues Glu256 and 291–295 (KLSKR) contribute to the ATP site. The short motif at 291–295 (KLSKR) is the 'KMSKS' region element.

This sequence belongs to the class-I aminoacyl-tRNA synthetase family. Glutamate--tRNA ligase type 1 subfamily.

The protein resides in the plastid. It is found in the chloroplast. Its subcellular location is the mitochondrion. It catalyses the reaction tRNA(Glu) + L-glutamate + ATP = L-glutamyl-tRNA(Glu) + AMP + diphosphate. Its function is as follows. Catalyzes the attachment of glutamate to tRNA(Glu) in a two-step reaction: glutamate is first activated by ATP to form Glu-AMP and then transferred to the acceptor end of tRNA(Glu). In Hordeum vulgare (Barley), this protein is Glutamate--tRNA ligase, chloroplastic/mitochondrial.